The sequence spans 252 residues: Ribose-5-phosphate isomerase (252 aa).

This sequence belongs to the ribose 5-phosphate isomerase family.

It localises to the cytoplasm. The catalysed reaction is aldehydo-D-ribose 5-phosphate = D-ribulose 5-phosphate. The protein operates within carbohydrate degradation; pentose phosphate pathway; D-ribose 5-phosphate from D-ribulose 5-phosphate (non-oxidative stage): step 1/1. The polypeptide is Ribose-5-phosphate isomerase (RKI1) (Debaryomyces hansenii (strain ATCC 36239 / CBS 767 / BCRC 21394 / JCM 1990 / NBRC 0083 / IGC 2968) (Yeast)).